Consider the following 187-residue polypeptide: UPF0301 protein YqgE (187 aa).

The protein belongs to the UPF0301 (AlgH) family.

The chain is UPF0301 protein YqgE from Salmonella choleraesuis (strain SC-B67).